Consider the following 353-residue polypeptide: Uroporphyrinogen decarboxylase (353 aa).

Residues 30–34, Asp79, Tyr154, Ser209, and His332 each bind substrate; that span reads RQAGR.

Belongs to the uroporphyrinogen decarboxylase family. Homodimer.

Its subcellular location is the cytoplasm. The catalysed reaction is uroporphyrinogen III + 4 H(+) = coproporphyrinogen III + 4 CO2. It participates in porphyrin-containing compound metabolism; protoporphyrin-IX biosynthesis; coproporphyrinogen-III from 5-aminolevulinate: step 4/4. Its function is as follows. Catalyzes the decarboxylation of four acetate groups of uroporphyrinogen-III to yield coproporphyrinogen-III. The chain is Uroporphyrinogen decarboxylase from Mycobacterium ulcerans (strain Agy99).